Consider the following 213-residue polypeptide: MQAYQRDFIRFAIDRGVLRFGEFTLKSGRTSPYFFNAGLFNTGSALAQLGRFYAAAVVESGIRFDVLFGPAYKGIPLASATAVALAEHHDRDLPWCFNRKEAKAHGEGGSLVGSPLAGNVLIIDDVITAGTAIREVMQIIKDQDATAAGVLIALNRQERGNGELSAIQEVERDFGIPVVSIVSLNQVLEFLADDEQLKQHLPAVEAYRAQYGI.

Lys26 lines the 5-phospho-alpha-D-ribose 1-diphosphate pocket. 34–35 provides a ligand contact to orotate; the sequence is FF. Residues 72–73, Arg99, Lys100, Lys103, His105, and 124–132 contribute to the 5-phospho-alpha-D-ribose 1-diphosphate site; these read YK and DDVITAGTA. 2 residues coordinate orotate: Thr128 and Arg156.

This sequence belongs to the purine/pyrimidine phosphoribosyltransferase family. PyrE subfamily. Homodimer. Requires Mg(2+) as cofactor.

It catalyses the reaction orotidine 5'-phosphate + diphosphate = orotate + 5-phospho-alpha-D-ribose 1-diphosphate. It functions in the pathway pyrimidine metabolism; UMP biosynthesis via de novo pathway; UMP from orotate: step 1/2. Functionally, catalyzes the transfer of a ribosyl phosphate group from 5-phosphoribose 1-diphosphate to orotate, leading to the formation of orotidine monophosphate (OMP). This chain is Orotate phosphoribosyltransferase, found in Pseudomonas syringae pv. tomato (strain ATCC BAA-871 / DC3000).